The primary structure comprises 547 residues: CTP synthase (547 aa).

The segment at 1-266 is amidoligase domain; it reads MTKYIFVTGG…GDYLVERLGL (266 aa). Ser-13 contributes to the CTP binding site. Ser-13 serves as a coordination point for UTP. 14–19 contacts ATP; that stretch reads SVGKGI. Position 54 (Tyr-54) interacts with L-glutamine. Asp-71 provides a ligand contact to ATP. Positions 71 and 141 each coordinate Mg(2+). Residues 148 to 150, 187 to 192, and Lys-223 each bind CTP; these read DIE and KTKPTQ. Residues 187–192 and Lys-223 contribute to the UTP site; that span reads KTKPTQ. The 243-residue stretch at 291-533 folds into the Glutamine amidotransferase type-1 domain; sequence PIALVGKYVE…IAAAAQTLLA (243 aa). Residue Gly-353 coordinates L-glutamine. Cys-380 functions as the Nucleophile; for glutamine hydrolysis in the catalytic mechanism. Residues 381 to 384, Glu-404, and Arg-461 each bind L-glutamine; that span reads LGMQ. Residues His-506 and Glu-508 contribute to the active site.

The protein belongs to the CTP synthase family. As to quaternary structure, homotetramer.

The enzyme catalyses UTP + L-glutamine + ATP + H2O = CTP + L-glutamate + ADP + phosphate + 2 H(+). It catalyses the reaction L-glutamine + H2O = L-glutamate + NH4(+). The catalysed reaction is UTP + NH4(+) + ATP = CTP + ADP + phosphate + 2 H(+). The protein operates within pyrimidine metabolism; CTP biosynthesis via de novo pathway; CTP from UDP: step 2/2. Allosterically activated by GTP, when glutamine is the substrate; GTP has no effect on the reaction when ammonia is the substrate. The allosteric effector GTP functions by stabilizing the protein conformation that binds the tetrahedral intermediate(s) formed during glutamine hydrolysis. Inhibited by the product CTP, via allosteric rather than competitive inhibition. In terms of biological role, catalyzes the ATP-dependent amination of UTP to CTP with either L-glutamine or ammonia as the source of nitrogen. Regulates intracellular CTP levels through interactions with the four ribonucleotide triphosphates. The protein is CTP synthase of Chloroflexus aggregans (strain MD-66 / DSM 9485).